Consider the following 560-residue polypeptide: Zinc finger protein 250 (560 aa).

The KRAB domain occupies 22–93 (LTFEDVAVLL…DRKGAKKSQG (72 aa)). Residues Lys125, Lys136, Lys148, and Lys162 each participate in a glycyl lysine isopeptide (Lys-Gly) (interchain with G-Cter in SUMO2) cross-link. The C2H2-type 1 zinc-finger motif lies at 199–221 (YMCVECGKCFGRSSHLLQHQRIH). Lys225 participates in a covalent cross-link: Glycyl lysine isopeptide (Lys-Gly) (interchain with G-Cter in SUMO2). 7 C2H2-type zinc fingers span residues 227-249 (YVCS…RRIH), 255-277 (YECN…HKIH), 283-305 (HECL…QRIH), 311-333 (YVCP…QRVH), 339-361 (HRCN…QRIH), 367-389 (YTCS…HNVH), and 395-417 (YECS…ERIH). Lys421 participates in a covalent cross-link: Glycyl lysine isopeptide (Lys-Gly) (interchain with G-Cter in SUMO2). 5 C2H2-type zinc fingers span residues 423-445 (YACY…QRVH), 451-473 (YVCG…ERIH), 479-501 (FQCT…LRTH), 507-529 (YECN…QRIH), and 535-557 (YECG…QKVH).

The protein belongs to the krueppel C2H2-type zinc-finger protein family.

It localises to the nucleus. Its function is as follows. May be involved in transcriptional regulation. The polypeptide is Zinc finger protein 250 (ZNF250) (Homo sapiens (Human)).